The sequence spans 564 residues: Protein glycosylation K (564 aa).

The Cytoplasmic portion of the chain corresponds to 1-15; that stretch reads MLKKLFFILSKEDKN. A helical membrane pass occupies residues 16-38; sequence FLFFLLVFSVFISFIETFAISLV. The 303-residue stretch at 17-319 folds into the ABC transmembrane type-1 domain; the sequence is LFFLLVFSVF…IITSYHDLLY (303 aa). Topologically, residues 39–76 are extracellular; the sequence is MPFITLASDFSYFDRNKYLISLKEYLNIPVFEIIVYFG. Positions 46–67 are important for stimulation of ATPase activity by lipid-linked oligosaccharides and subsequent translocation of lipid-linked oligosaccharides; that stretch reads SDFSYFDRNKYLISLKEYLNIP. The helical transmembrane segment at 77–98 threads the bilayer; sequence VGLIVFYVFRALLNAYYFHLLA. Topologically, residues 99–149 are cytoplasmic; the sequence is RFSKGRYHAIAYKVFSKFLNINYEKFTQKNQSEILKSITGEVYNLSTMISS. A helical membrane pass occupies residues 150–170; the sequence is FLLLMSEIFVVLLLYALMLLI. Topologically, residues 171 to 173 are extracellular; sequence NYK. Residues 174–197 form a helical membrane-spanning segment; that stretch reads ITLFLSIFMVLNAFILVKILSPII. Residues 198 to 254 are Cytoplasmic-facing; sequence KKAGVRREEAMKNFFEILNTNLNNFKFIKLKTKEDGVLSLFKAQSEAFSKANITNES. The chain crosses the membrane as a helical span at residues 255–276; that stretch reads VAAVPRIYLEGIGFCVLVFIVV. The Extracellular segment spans residues 277-292; sequence FLVLKNESDISGILST. A helical membrane pass occupies residues 293–314; that stretch reads ISIFVLALYRLMPSANRIITSY. The Cytoplasmic portion of the chain corresponds to 315–564; the sequence is HDLLYYHSSL…LEHGKLKEEK (250 aa). An ABC transporter domain is found at 349-564; sequence LKICNLSFGY…LEHGKLKEEK (216 aa). An ATP-binding site is contributed by 382-389; the sequence is GESGCGKS.

Belongs to the ABC transporter superfamily. Homodimer; domain-swapped. Helices that arise in transmembrane regions 4 and 5 from one subunit cross over and contact the nucleotide-binding domain from the other subunit.

It localises to the cell inner membrane. It catalyses the reaction ATP + H2O + lipopolysaccharideSide 1 = ADP + phosphate + lipopolysaccharideSide 2.. Its pathway is protein modification; protein glycosylation. Mediates the ATP-dependent translocation of the undecaprenylpyrophosphate-linked heptasaccharide intermediate across the cell membrane; this is an essential step during the N-linked protein glycosylation pathway. Transport across the membrane is effected via ATP-driven conformation changes. Most likely, only the polar and charged part of the glycolipid enter the substrate-binding cavity, and the lipid tail remains exposed to the membrane lipids during the transmembrane flipping process. This chain is Protein glycosylation K (pglK), found in Campylobacter jejuni subsp. jejuni serotype O:2 (strain ATCC 700819 / NCTC 11168).